The following is a 340-amino-acid chain: UPF0324 membrane protein BA_5405/GBAA_5405/BAS5024 (340 aa).

A run of 10 helical transmembrane segments spans residues 13–35 (FGFS…LAEL), 40–59 (IMGQ…AAIG), 99–118 (VLVI…YGLT), 128–150 (GILT…APQV), 157–179 (TAVG…TLLY), 189–211 (YGVF…APGG), 218–240 (AVIV…GVWF), 255–277 (LPIP…GIIP), 279–301 (VVAG…GLGL), and 316–338 (FVAG…YALG).

This sequence belongs to the UPF0324 family.

The protein localises to the cell membrane. The chain is UPF0324 membrane protein BA_5405/GBAA_5405/BAS5024 from Bacillus anthracis.